The sequence spans 275 residues: Large ribosomal subunit protein uL2 (275 aa).

Residues 223–275 are disordered; that stretch reads VAMNPVDHPHGGGEGRTGEGRVPVSPWGTPAKGYRTRNNKRTDNMIVRRRHSK. Positions 229 to 241 are enriched in basic and acidic residues; it reads DHPHGGGEGRTGE.

It belongs to the universal ribosomal protein uL2 family. As to quaternary structure, part of the 50S ribosomal subunit. Forms a bridge to the 30S subunit in the 70S ribosome.

Functionally, one of the primary rRNA binding proteins. Required for association of the 30S and 50S subunits to form the 70S ribosome, for tRNA binding and peptide bond formation. It has been suggested to have peptidyltransferase activity; this is somewhat controversial. Makes several contacts with the 16S rRNA in the 70S ribosome. The protein is Large ribosomal subunit protein uL2 of Laribacter hongkongensis (strain HLHK9).